A 295-amino-acid polypeptide reads, in one-letter code: Small ribosomal subunit protein uS2 (295 aa).

Ser-2 bears the N-acetylserine mark. Ser-43 bears the Phosphoserine mark. Lys-52 carries the post-translational modification N6-acetyllysine. The tract at residues 54-113 (TWEKLLLAARAIVAIENPADVSVISSRNTGQRAVLKFAAATGATPIAGRFTPGTFTNQIQ) is interaction with PPP1R16B. Lys-89 carries the post-translational modification N6-acetyllysine; alternate. Lys-89 is covalently cross-linked (Glycyl lysine isopeptide (Lys-Gly) (interchain with G-Cter in SUMO2); alternate). Residue Thr-97 is modified to Phosphothreonine. Laminin-binding regions lie at residues 161-180 (IPCN…MLAR) and 205-229 (RDPE…EFQG). [DE]-W-[ST] repeat units lie at residues 230-232 (EWT), 247-249 (DWS), 266-268 (DWS), 275-277 (DWS), and 293-295 (EWS). A laminin-binding region spans residues 242–295 (QPEVADWSEGVQVPSVPIQQFPTEDWSAQPSTEDWSAAPTAQATEWVGTTTEWS). Positions 266 to 295 (DWSAQPSTEDWSAAPTAQATEWVGTTTEWS) are disordered.

This sequence belongs to the universal ribosomal protein uS2 family. In terms of assembly, monomer (37LRP) and homodimer (67LR). Component of the small ribosomal subunit. Mature ribosomes consist of a small (40S) and a large (60S) subunit. The 40S subunit contains about 33 different proteins and 1 molecule of RNA (18S). The 60S subunit contains about 49 different proteins and 3 molecules of RNA (28S, 5.8S and 5S). Interacts with RPS21. Interacts with several laminins including at least LAMB1. Interacts with MDK. The mature dimeric form interacts with PPP1R16B (via its fourth ankyrin repeat). Interacts with PPP1CA only in the presence of PPP1R16B. Post-translationally, acylated. Acylation may be a prerequisite for conversion of the monomeric 37 kDa laminin receptor precursor (37LRP) to the mature dimeric 67 kDa laminin receptor (67LR), and may provide a mechanism for membrane association. In terms of processing, cleaved by stromelysin-3 (ST3) at the cell surface. Cleavage by stromelysin-3 may be a mechanism to alter cell-extracellular matrix interactions.

Its subcellular location is the cell membrane. It is found in the cytoplasm. The protein resides in the nucleus. Its function is as follows. Required for the assembly and/or stability of the 40S ribosomal subunit. Required for the processing of the 20S rRNA-precursor to mature 18S rRNA in a late step of the maturation of 40S ribosomal subunits. Also functions as a cell surface receptor for laminin. Plays a role in cell adhesion to the basement membrane and in the consequent activation of signaling transduction pathways. May play a role in cell fate determination and tissue morphogenesis. Also acts as a receptor for several other ligands, including the pathogenic prion protein, viruses, and bacteria. Acts as a PPP1R16B-dependent substrate of PPP1CA. The protein is Small ribosomal subunit protein uS2 of Bos taurus (Bovine).